The sequence spans 791 residues: Phenylalanine--tRNA ligase beta subunit (791 aa).

Residues Gly-39–Ala-147 enclose the tRNA-binding domain. Positions Pro-400 to Thr-475 constitute a B5 domain. Mg(2+) is bound by residues Asp-453, Asp-459, Glu-462, and Glu-463. The 94-residue stretch at Ser-697–Arg-790 folds into the FDX-ACB domain.

It belongs to the phenylalanyl-tRNA synthetase beta subunit family. Type 1 subfamily. Tetramer of two alpha and two beta subunits. Requires Mg(2+) as cofactor.

Its subcellular location is the cytoplasm. The catalysed reaction is tRNA(Phe) + L-phenylalanine + ATP = L-phenylalanyl-tRNA(Phe) + AMP + diphosphate + H(+). This chain is Phenylalanine--tRNA ligase beta subunit, found in Xanthomonas campestris pv. campestris (strain 8004).